The primary structure comprises 398 residues: Arginine biosynthesis bifunctional protein ArgJ (398 aa).

Substrate contacts are provided by Thr-148, Lys-174, Thr-185, Glu-271, Asn-393, and Thr-398. The active-site Nucleophile is the Thr-185.

This sequence belongs to the ArgJ family. Heterotetramer of two alpha and two beta chains.

The protein localises to the cytoplasm. The catalysed reaction is N(2)-acetyl-L-ornithine + L-glutamate = N-acetyl-L-glutamate + L-ornithine. The enzyme catalyses L-glutamate + acetyl-CoA = N-acetyl-L-glutamate + CoA + H(+). The protein operates within amino-acid biosynthesis; L-arginine biosynthesis; L-ornithine and N-acetyl-L-glutamate from L-glutamate and N(2)-acetyl-L-ornithine (cyclic): step 1/1. It functions in the pathway amino-acid biosynthesis; L-arginine biosynthesis; N(2)-acetyl-L-ornithine from L-glutamate: step 1/4. Its function is as follows. Catalyzes two activities which are involved in the cyclic version of arginine biosynthesis: the synthesis of N-acetylglutamate from glutamate and acetyl-CoA as the acetyl donor, and of ornithine by transacetylation between N(2)-acetylornithine and glutamate. In Listeria monocytogenes serotype 4b (strain F2365), this protein is Arginine biosynthesis bifunctional protein ArgJ.